A 244-amino-acid polypeptide reads, in one-letter code: Tegument protein UL51 homolog (244 aa).

Cysteine 10 is lipidated: S-palmitoyl cysteine; by host.

Belongs to the herpesviridae UL51 family. In terms of assembly, oligomerizes. Interacts with ORF55; this interaction mediates ORF55 incorporation to virions. Post-translationally, phosphorylated. Palmitoylation is necessary for Golgi localization.

The protein localises to the virion tegument. It is found in the host cytoplasm. It localises to the host Golgi apparatus. Plays several roles during the time course of infection, including egress of virus particles from the perinuclear space and secondary envelopment of cytoplasmic capsids that bud into specific trans-Golgi network (TGN)-derived membranes. This Equus caballus (Horse) protein is Tegument protein UL51 homolog (8).